We begin with the raw amino-acid sequence, 428 residues long: Enolase (428 aa).

Position 163 (glutamine 163) interacts with (2R)-2-phosphoglycerate. Glutamate 205 (proton donor) is an active-site residue. Aspartate 242, glutamate 286, and aspartate 313 together coordinate Mg(2+). Positions 338, 367, 368, and 389 each coordinate (2R)-2-phosphoglycerate. Catalysis depends on lysine 338, which acts as the Proton acceptor.

The protein belongs to the enolase family. It depends on Mg(2+) as a cofactor.

The protein resides in the cytoplasm. It localises to the secreted. It is found in the cell surface. It carries out the reaction (2R)-2-phosphoglycerate = phosphoenolpyruvate + H2O. The protein operates within carbohydrate degradation; glycolysis; pyruvate from D-glyceraldehyde 3-phosphate: step 4/5. Functionally, catalyzes the reversible conversion of 2-phosphoglycerate (2-PG) into phosphoenolpyruvate (PEP). It is essential for the degradation of carbohydrates via glycolysis. In Lactobacillus helveticus (strain DPC 4571), this protein is Enolase.